Reading from the N-terminus, the 292-residue chain is Phosphatidylserine decarboxylase proenzyme (292 aa).

Residues D89, H146, and S252 each act as charge relay system; for autoendoproteolytic cleavage activity in the active site. Catalysis depends on S252, which acts as the Schiff-base intermediate with substrate; via pyruvic acid; for decarboxylase activity. The residue at position 252 (S252) is a Pyruvic acid (Ser); by autocatalysis.

Belongs to the phosphatidylserine decarboxylase family. PSD-B subfamily. Prokaryotic type I sub-subfamily. Heterodimer of a large membrane-associated beta subunit and a small pyruvoyl-containing alpha subunit. Pyruvate serves as cofactor. Is synthesized initially as an inactive proenzyme. Formation of the active enzyme involves a self-maturation process in which the active site pyruvoyl group is generated from an internal serine residue via an autocatalytic post-translational modification. Two non-identical subunits are generated from the proenzyme in this reaction, and the pyruvate is formed at the N-terminus of the alpha chain, which is derived from the carboxyl end of the proenzyme. The autoendoproteolytic cleavage occurs by a canonical serine protease mechanism, in which the side chain hydroxyl group of the serine supplies its oxygen atom to form the C-terminus of the beta chain, while the remainder of the serine residue undergoes an oxidative deamination to produce ammonia and the pyruvoyl prosthetic group on the alpha chain. During this reaction, the Ser that is part of the protease active site of the proenzyme becomes the pyruvoyl prosthetic group, which constitutes an essential element of the active site of the mature decarboxylase.

The protein resides in the cell membrane. It carries out the reaction a 1,2-diacyl-sn-glycero-3-phospho-L-serine + H(+) = a 1,2-diacyl-sn-glycero-3-phosphoethanolamine + CO2. It participates in phospholipid metabolism; phosphatidylethanolamine biosynthesis; phosphatidylethanolamine from CDP-diacylglycerol: step 2/2. Its function is as follows. Catalyzes the formation of phosphatidylethanolamine (PtdEtn) from phosphatidylserine (PtdSer). The polypeptide is Phosphatidylserine decarboxylase proenzyme (Shewanella baltica (strain OS185)).